The following is a 378-amino-acid chain: Actin-related protein 2/3 complex subunit 1A (378 aa).

7 WD repeats span residues 8-47 (RFAE…HWER), 53-92 (KHDQ…WVPT), 97-138 (RLNR…WVSK), 143-182 (RHES…VDTK), 203-242 (LSYS…PLAQ), 257-295 (ISEK…KAAS), and 331-375 (VHDN…QELG).

The protein belongs to the WD repeat ARPC1 family. As to quaternary structure, component of the Arp2/3 complex composed of ARP2, ARP3, ARPC1/p41-ARC, ARPC2/p34-ARC, ARPC3/p21-ARC, ARPC4/p20-ARC and ARPC5/p16-ARC. Expressed at low levels in all tissues with a relatively highest expression in inflorescences.

It localises to the cytoplasm. The protein resides in the cytoskeleton. Functions as a component of the Arp2/3 complex which is involved in regulation of actin polymerization and together with an activating nucleation-promoting factor (NPF) mediates the formation of branched actin networks. Arp2/3 complex plays a critical role in the control of cell morphogenesis via the modulation of cell polarity development. This Arabidopsis thaliana (Mouse-ear cress) protein is Actin-related protein 2/3 complex subunit 1A (ARPC1A).